A 376-amino-acid polypeptide reads, in one-letter code: tRNA 2-selenouridine synthase (376 aa).

Positions 15-138 (FVAGKPLIDL…MRQYLIGVIE (124 aa)) constitute a Rhodanese domain. Cys98 serves as the catalytic S-selanylcysteine intermediate.

It belongs to the SelU family. As to quaternary structure, monomer.

It catalyses the reaction 5-methylaminomethyl-2-thiouridine(34) in tRNA + selenophosphate + (2E)-geranyl diphosphate + H2O + H(+) = 5-methylaminomethyl-2-selenouridine(34) in tRNA + (2E)-thiogeraniol + phosphate + diphosphate. The catalysed reaction is 5-methylaminomethyl-2-thiouridine(34) in tRNA + (2E)-geranyl diphosphate = 5-methylaminomethyl-S-(2E)-geranyl-thiouridine(34) in tRNA + diphosphate. It carries out the reaction 5-methylaminomethyl-S-(2E)-geranyl-thiouridine(34) in tRNA + selenophosphate + H(+) = 5-methylaminomethyl-2-(Se-phospho)selenouridine(34) in tRNA + (2E)-thiogeraniol. The enzyme catalyses 5-methylaminomethyl-2-(Se-phospho)selenouridine(34) in tRNA + H2O = 5-methylaminomethyl-2-selenouridine(34) in tRNA + phosphate. Involved in the post-transcriptional modification of the uridine at the wobble position (U34) of tRNA(Lys), tRNA(Glu) and tRNA(Gln). Catalyzes the conversion of 2-thiouridine (S2U-RNA) to 2-selenouridine (Se2U-RNA). Acts in a two-step process involving geranylation of 2-thiouridine (S2U) to S-geranyl-2-thiouridine (geS2U) and subsequent selenation of the latter derivative to 2-selenouridine (Se2U) in the tRNA chain. The protein is tRNA 2-selenouridine synthase of Shewanella oneidensis (strain ATCC 700550 / JCM 31522 / CIP 106686 / LMG 19005 / NCIMB 14063 / MR-1).